The chain runs to 353 residues: Methylthioribose-1-phosphate isomerase (353 aa).

Residues 51–53 (RGA), R94, and Q203 contribute to the substrate site. The active-site Proton donor is D244. 254-255 (NK) contributes to the substrate binding site.

It belongs to the eIF-2B alpha/beta/delta subunits family. MtnA subfamily.

The catalysed reaction is 5-(methylsulfanyl)-alpha-D-ribose 1-phosphate = 5-(methylsulfanyl)-D-ribulose 1-phosphate. It participates in amino-acid biosynthesis; L-methionine biosynthesis via salvage pathway; L-methionine from S-methyl-5-thio-alpha-D-ribose 1-phosphate: step 1/6. Functionally, catalyzes the interconversion of methylthioribose-1-phosphate (MTR-1-P) into methylthioribulose-1-phosphate (MTRu-1-P). This Nostoc punctiforme (strain ATCC 29133 / PCC 73102) protein is Methylthioribose-1-phosphate isomerase.